Here is a 601-residue protein sequence, read N- to C-terminus: Glutathione-regulated potassium-efflux system protein KefB (601 aa).

The next 13 membrane-spanning stretches (helical) occupy residues 4-24 (ADLL…VPLA), 29-49 (IGAV…GLGF), 55-75 (EILH…GLEL), 87-107 (IFGV…GLLM), 111-131 (FLWQ…TAMA), 152-172 (VLLF…LLAG), 177-197 (HFDW…LIGG), 207-227 (FIAA…LVLS), 230-250 (LFMD…GVLL), 262-282 (AIDP…GMSL), 284-304 (LGVL…LVVI), 324-344 (MQFA…FSTA), and 356-376 (ALLL…MKGI). Positions 400–519 (KPQVIVVGFG…AGVTQFSRET (120 aa)) constitute an RCK N-terminal domain.

The protein belongs to the monovalent cation:proton antiporter 2 (CPA2) transporter (TC 2.A.37) family. KefB subfamily. Interacts with the regulatory subunit KefG.

It localises to the cell inner membrane. Its function is as follows. Pore-forming subunit of a potassium efflux system that confers protection against electrophiles. Catalyzes K(+)/H(+) antiport. The sequence is that of Glutathione-regulated potassium-efflux system protein KefB from Salmonella paratyphi C (strain RKS4594).